The following is a 370-amino-acid chain: MNILLRLIVFALDPLGLGRRFLIRPAVNLGWNVYDRVRSKADEKVGTVRELVLRLGLIAFAVVLIIWLAVFMYAAFYYVYMPAISHTRPVHMQFKTCLETSTPCTFPHAHVSLTKKQQLLMVGQAYKVIVNIDMPESPQNLELGMFMVCAEMRDYDSMLRGHSCRSAMMRYRSPLIRMISTWVLSPLYVLGWKEEFQQVPVEIFSRYLEERQHPITDVYVEIQSQKIQFYTVTLHIVADFTGLRYIMFNWPVLSAIVAISTNLFFILVVFLLSWYHWSDAKWLHSVQIKYARLTKSLEPGVIHSKASSLRDDDDDLVAYSDKSDIADVGGDTLSDVDADDLVLVKKSRSGKRESPDALRKRPTKKTTADH.

The first 18 residues, 1-18 (MNILLRLIVFALDPLGLG), serve as a signal peptide directing secretion. The Cytoplasmic segment spans residues 19-55 (RRFLIRPAVNLGWNVYDRVRSKADEKVGTVRELVLRL). The helical transmembrane segment at 56–76 (GLIAFAVVLIIWLAVFMYAAF) threads the bilayer. Topologically, residues 77-251 (YYVYMPAISH…GLRYIMFNWP (175 aa)) are lumenal. Residues 252–272 (VLSAIVAISTNLFFILVVFLL) traverse the membrane as a helical segment. The Cytoplasmic segment spans residues 273–370 (SWYHWSDAKW…RPTKKTTADH (98 aa)). Residues 346 to 370 (KSRSGKRESPDALRKRPTKKTTADH) form a disordered region. Residues 350-359 (GKRESPDALR) are compositionally biased toward basic and acidic residues.

As to expression, widely expressed, with highest levels detected in fat body, moderate levels detected in salivary gland, midgut and muscle, and weak expression detected in brain.

It is found in the endoplasmic reticulum membrane. It localises to the lipid droplet. Acts as a tissue-autonomous lipid modulator, preventing ectopic lipid accumulation in salivary gland (a non-adipose tissue) and in promoting lipid storage in fat tissue. Required for the growth and maturation of small nascent lipid droplets (LDs) into larger mature LDs. This Drosophila melanogaster (Fruit fly) protein is Seipin.